A 100-amino-acid polypeptide reads, in one-letter code: Noncompact myelin-associated protein (100 aa).

Topologically, residues 1 to 28 (MTTATTLGDAVFSLNMTRGEDALYKSSG) are extracellular. Residues 29–49 (AIVAAIVVVVIIIVTLVLILL) traverse the membrane as a helical segment. Over 50 to 100 (KMYNRRMRTRRELEPKSPKPPVPPALDPSSNGSQQPATVTFDPANVHVETR) the chain is Cytoplasmic. The tract at residues 58–100 (TRRELEPKSPKPPVPPALDPSSNGSQQPATVTFDPANVHVETR) is disordered.

Glycosylated. As to expression, found in the peripheral nervous system (PNS) Schwann cells (at protein level). Expressed in the PNS, primarily limited to Schwann cells.

The protein localises to the cell membrane. In terms of biological role, plays a role in myelin formation. The protein is Noncompact myelin-associated protein (Ncmap) of Mus musculus (Mouse).